A 408-amino-acid polypeptide reads, in one-letter code: F-box A protein 155 (408 aa).

A disordered region spans residues 1–22 (MSDRGSDQSSSSSDSAQHIPPK).

This sequence belongs to the FTH family.

The polypeptide is F-box A protein 155 (fbxa-155) (Caenorhabditis elegans).